We begin with the raw amino-acid sequence, 596 residues long: Phosphoenolpyruvate carboxykinase [GTP] (596 aa).

Substrate is bound by residues arginine 77 and 205-207 (YGG). Mn(2+) contacts are provided by lysine 214 and histidine 234. Substrate is bound at residue serine 256. 257 to 262 (ACGKTN) provides a ligand contact to GTP. Cysteine 258 is a catalytic residue. Aspartate 283 provides a ligand contact to Mn(2+). Positions 362 to 388 (KKGSTEKAAHPNSRFTAPAKNNPAISP) are disordered. A substrate-binding site is contributed by 373–375 (NSR). Residues arginine 375, arginine 406, and 499–502 (YGDN) each bind GTP.

It belongs to the phosphoenolpyruvate carboxykinase [GTP] family. Monomer. It depends on Mn(2+) as a cofactor.

It is found in the cytoplasm. It carries out the reaction oxaloacetate + GTP = phosphoenolpyruvate + GDP + CO2. It participates in carbohydrate biosynthesis; gluconeogenesis. Functionally, catalyzes the conversion of oxaloacetate (OAA) to phosphoenolpyruvate (PEP), the rate-limiting step in the metabolic pathway that produces glucose from lactate and other precursors derived from the citric acid cycle. The sequence is that of Phosphoenolpyruvate carboxykinase [GTP] from Anaeromyxobacter dehalogenans (strain 2CP-C).